Here is a 995-residue protein sequence, read N- to C-terminus: MSAEAADREAATSSRPCTPPQTCWFEFLLEESLLEKHLRKPCPDPAPVQLIVQFLEQASKPSVNEQNQVQPPPDNKRNRILKLLALKVAAHLKWDLDILEKSLSVPVLNMLLNELLCISKVPPGTKHVDMDLATLPPTTAMAVLLYNRWAIRTIVQSSFPVKQAKPGPPQLSVMNQMQQEKELTENILKVLKEQAADSILVLEAALKLNKDLYVHTMRTLDLLAMEPGMVNGETESSTAGLKVKTEEMQCQVCYDLGAAYFQQGSTNSAVYENAREKFFRTKELIAEIGSLSLHCTIDEKRLAGYCQACDVLVPSSDSTSQQLTPYSQVHICLRSGNYQEVIQIFIEDNLTLSLPVQFRQSVLRELFKKAQQGNEALDEICFKVCACNTVRDILEGRTISVQFNQLFLRPNKEKIDFLLEVCSRSVNLEKASESLKGNMAAFLKNVCLGLEDLQYVFMISSHELFITLLKDEERKLLVDQMRKRSPRVNLCIKPVTSFYDIPASASVNIGQLEHQLILSVDPWRIRQILIELHGMTSERQFWTVSNKWEVPSVYSGVILGIKDNLTRDLVYILMAKGLHCSTVKDFSHAKQLFAACLELVTEFSPKLRQVMLNEMLLLDIHTHEAGTGQAGERPPSDLISRVRGYLEMRLPDIPLRQVIAEECVAFMLNWRENEYLTLQVPAFLLQSNPYVKLGQLLAATCKELPGPKESRRTAKDLWEVVVQICSVSSQHKRGNDGRVSLIKQRESTLGIMYRSELLSFIKKLREPLVLTIILSLFVKLHNVREDIVNDITAEHISIWPSSIPNLQSVDFEAVAITVKELVRYTLSINPNNHSWLIIQADIYFATNQYSAALHYYLQAGAVCSDFFNKAVPPDVYTDQVIKRMIKCCSLLNCHTQVAILCQFLREIDYKTAFKSLQEQNSHDAMDSYYDYIWDVTILEYLTYLHHKRGETDKRQIAIKAIGQTELNASNPEEVLQLAAQRRKKKFLQAMAKLYF.

Threonine 18 carries the phosphothreonine modification. The short motif at tryptophan 24 to leucine 29 is the WFEF motif element. 4 TPR repeats span residues cysteine 250–isoleucine 288, serine 320–valine 356, valine 570–phenylalanine 603, and histidine 833–phenylalanine 866.

It belongs to the Integrator subunit 8 family. Component of the Integrator complex, composed of core subunits INTS1, INTS2, INTS3, INTS4, INTS5, INTS6, INTS7, INTS8, INTS9/RC74, INTS10, INTS11/CPSF3L, INTS12, INTS13, INTS14 and INTS15. The core complex associates with protein phosphatase 2A subunits PPP2CA and PPP2R1A, to form the Integrator-PP2A (INTAC) complex.

It localises to the nucleus. The protein localises to the chromosome. Its function is as follows. Component of the integrator complex, a multiprotein complex that terminates RNA polymerase II (Pol II) transcription in the promoter-proximal region of genes. The integrator complex provides a quality checkpoint during transcription elongation by driving premature transcription termination of transcripts that are unfavorably configured for transcriptional elongation: the complex terminates transcription by (1) catalyzing dephosphorylation of the C-terminal domain (CTD) of Pol II subunit POLR2A/RPB1 and SUPT5H/SPT5, (2) degrading the exiting nascent RNA transcript via endonuclease activity and (3) promoting the release of Pol II from bound DNA. The integrator complex is also involved in terminating the synthesis of non-coding Pol II transcripts, such as enhancer RNAs (eRNAs), small nuclear RNAs (snRNAs), telomerase RNAs and long non-coding RNAs (lncRNAs). Within the integrator complex, INTS8 is required for the recruitment of protein phosphatase 2A (PP2A) to transcription pause-release checkpoint. This is Integrator complex subunit 8 from Homo sapiens (Human).